Here is a 201-residue protein sequence, read N- to C-terminus: Adenylyl-sulfate kinase (201 aa).

Residue 35 to 42 coordinates ATP; sequence GLSGSGKS. Catalysis depends on Ser-109, which acts as the Phosphoserine intermediate.

The protein belongs to the APS kinase family.

The catalysed reaction is adenosine 5'-phosphosulfate + ATP = 3'-phosphoadenylyl sulfate + ADP + H(+). Its pathway is sulfur metabolism; hydrogen sulfide biosynthesis; sulfite from sulfate: step 2/3. Its function is as follows. Catalyzes the synthesis of activated sulfate. This chain is Adenylyl-sulfate kinase, found in Prochlorococcus marinus (strain SARG / CCMP1375 / SS120).